Here is a 90-residue protein sequence, read N- to C-terminus: Mitochondrial import inner membrane translocase subunit Tim8 A (90 aa).

The short motif at 36–59 (CWDKCMDKPGPKLDSRAEMCFVNC) is the Twin CX3C motif element. 2 disulfides stabilise this stretch: Cys36–Cys59 and Cys40–Cys55.

This sequence belongs to the small Tim family. In terms of assembly, heterohexamer; composed of 3 copies of TIMM8A and 3 copies of TIMM13, named soluble 70 kDa complex. Associates with the TIM22 complex, whose core is composed of TIMM22.

It localises to the mitochondrion inner membrane. In terms of biological role, mitochondrial intermembrane chaperone that participates in the import and insertion of some multi-pass transmembrane proteins into the mitochondrial inner membrane. Also required for the transfer of beta-barrel precursors from the TOM complex to the sorting and assembly machinery (SAM complex) of the outer membrane. Acts as a chaperone-like protein that protects the hydrophobic precursors from aggregation and guide them through the mitochondrial intermembrane space. The TIMM8-TIMM13 complex mediates the import of some proteins while the predominant TIMM9-TIMM10 70 kDa complex mediates the import of much more proteins. This chain is Mitochondrial import inner membrane translocase subunit Tim8 A (timm8a), found in Takifugu rubripes (Japanese pufferfish).